Here is a 145-residue protein sequence, read N- to C-terminus: Small ribosomal subunit protein bS6 (145 aa).

Belongs to the bacterial ribosomal protein bS6 family.

Functionally, binds together with bS18 to 16S ribosomal RNA. The polypeptide is Small ribosomal subunit protein bS6 (Mycoplasmopsis agalactiae (strain NCTC 10123 / CIP 59.7 / PG2) (Mycoplasma agalactiae)).